Reading from the N-terminus, the 297-residue chain is 4-hydroxy-tetrahydrodipicolinate synthase (297 aa).

Pyruvate is bound at residue threonine 55. The active-site Proton donor/acceptor is the tyrosine 144. The active-site Schiff-base intermediate with substrate is the lysine 172. Isoleucine 213 serves as a coordination point for pyruvate.

It belongs to the DapA family. In terms of assembly, homotetramer; dimer of dimers.

The protein localises to the cytoplasm. The catalysed reaction is L-aspartate 4-semialdehyde + pyruvate = (2S,4S)-4-hydroxy-2,3,4,5-tetrahydrodipicolinate + H2O + H(+). Its pathway is amino-acid biosynthesis; L-lysine biosynthesis via DAP pathway; (S)-tetrahydrodipicolinate from L-aspartate: step 3/4. Its function is as follows. Catalyzes the condensation of (S)-aspartate-beta-semialdehyde [(S)-ASA] and pyruvate to 4-hydroxy-tetrahydrodipicolinate (HTPA). The sequence is that of 4-hydroxy-tetrahydrodipicolinate synthase from Lactococcus lactis subsp. cremoris (strain MG1363).